The following is a 145-amino-acid chain: Transcriptional regulator SlyA (145 aa).

An HTH marR-type domain is found at 2 to 135; it reads ELPLGSDLAR…LALLVSRLEK (134 aa). The H-T-H motif DNA-binding region spans 49 to 72; it reads QIQLAKAIGIEQPSLVRTLDQLEE.

The protein belongs to the SlyA family. As to quaternary structure, homodimer.

Transcription regulator that can specifically activate or repress expression of target genes. Regulates genes involved in production of antibiotic and exoenzyme virulence determinants in the phytopathogen. Required for the expression of the virulence protein evf during Drosophila melanogaster infection. In Pectobacterium carotovorum subsp. carotovorum (Erwinia carotovora subsp. carotovora), this protein is Transcriptional regulator SlyA.